Reading from the N-terminus, the 194-residue chain is IMP cyclohydrolase (194 aa).

The protein belongs to the archaeal IMP cyclohydrolase family.

It catalyses the reaction IMP + H2O = 5-formamido-1-(5-phospho-D-ribosyl)imidazole-4-carboxamide. It participates in purine metabolism; IMP biosynthesis via de novo pathway; IMP from 5-formamido-1-(5-phospho-D-ribosyl)imidazole-4-carboxamide: step 1/1. Functionally, catalyzes the cyclization of 5-formylamidoimidazole-4-carboxamide ribonucleotide to IMP. The chain is IMP cyclohydrolase from Halobacterium salinarum (strain ATCC 29341 / DSM 671 / R1).